The chain runs to 251 residues: Probable transcriptional regulatory protein MRA_2631 (251 aa).

It belongs to the TACO1 family.

Its subcellular location is the cytoplasm. This is Probable transcriptional regulatory protein MRA_2631 from Mycobacterium tuberculosis (strain ATCC 25177 / H37Ra).